The sequence spans 389 residues: S-adenosylmethionine synthase (389 aa).

ATP is bound at residue histidine 15. Residue aspartate 17 participates in Mg(2+) binding. Glutamate 43 lines the K(+) pocket. Residues glutamate 56 and glutamine 99 each contribute to the L-methionine site. The flexible loop stretch occupies residues 99–109; sequence QSPDIAQGVNE. ATP contacts are provided by residues 166–168, 234–235, aspartate 243, 249–250, alanine 266, and lysine 270; these read DAK, RF, and RK. Aspartate 243 lines the L-methionine pocket. Residue lysine 274 coordinates L-methionine.

The protein belongs to the AdoMet synthase family. Homotetramer; dimer of dimers. Mg(2+) serves as cofactor. It depends on K(+) as a cofactor.

Its subcellular location is the cytoplasm. The catalysed reaction is L-methionine + ATP + H2O = S-adenosyl-L-methionine + phosphate + diphosphate. The protein operates within amino-acid biosynthesis; S-adenosyl-L-methionine biosynthesis; S-adenosyl-L-methionine from L-methionine: step 1/1. Functionally, catalyzes the formation of S-adenosylmethionine (AdoMet) from methionine and ATP. The overall synthetic reaction is composed of two sequential steps, AdoMet formation and the subsequent tripolyphosphate hydrolysis which occurs prior to release of AdoMet from the enzyme. The polypeptide is S-adenosylmethionine synthase (Neisseria meningitidis serogroup C (strain 053442)).